A 744-amino-acid polypeptide reads, in one-letter code: Cytoskeleton-associated protein 2-like (744 aa).

Disordered stretches follow at residues 35-56 (YLKAKNNCPNPPHSKSTIGPKK), 76-169 (LQSR…THVE), 182-216 (KENLPQDLPNSERKPNPESWTINKPQTNQTKSSLA), 317-337 (TVTEQKVKHSKPSTHPSVLQG), and 428-452 (NKTAPRTQAGGPTISGRGVPNGAQT). Polar residues-rich tracts occupy residues 76–86 (LQSRPANITRS), 102–129 (SESVSSNPNGKPPGNSQQLRGFGSSTDG), and 137–154 (GSLNVQKLKTTKQQVTDQ). K195 participates in a covalent cross-link: Glycyl lysine isopeptide (Lys-Gly) (interchain with G-Cter in SUMO1); alternate. K195 participates in a covalent cross-link: Glycyl lysine isopeptide (Lys-Gly) (interchain with G-Cter in SUMO2); alternate. Residues 199-216 (ESWTINKPQTNQTKSSLA) are compositionally biased toward polar residues. S744 carries the post-translational modification Phosphoserine.

It belongs to the CKAP2 family. Ubiquitinated by the anaphase promoting complex/cyclosome (APC/C).

The protein localises to the cytoplasm. It localises to the cytoskeleton. The protein resides in the spindle pole. In terms of biological role, microtubule-associated protein required for mitotic spindle formation and cell-cycle progression in neural progenitor cells. The chain is Cytoskeleton-associated protein 2-like (CKAP2L) from Bos taurus (Bovine).